Reading from the N-terminus, the 217-residue chain is Secreted RxLR effector protein 147 (217 aa).

Positions Met1–Ala23 are cleaved as a signal peptide. Positions Glu22–His52 are disordered. The RxLR-dEER signature appears at Arg46–Arg67.

It belongs to the RxLR effector family.

It is found in the secreted. The protein resides in the host nucleus. The protein localises to the host cytoplasm. Secreted effector that completely suppresses the host cell death induced by cell death-inducing proteins. This is Secreted RxLR effector protein 147 from Plasmopara viticola (Downy mildew of grapevine).